A 96-amino-acid polypeptide reads, in one-letter code: (4S)-4-hydroxy-5-phosphonooxypentane-2,3-dione isomerase (96 aa).

An ABM domain is found at 2–91; sequence HVTLVEINVH…MTGPRKKRLF (90 aa).

It belongs to the LsrG family. In terms of assembly, homodimer.

It localises to the cytoplasm. It catalyses the reaction (2S)-2-hydroxy-3,4-dioxopentyl phosphate = 3-hydroxy-2,4-dioxopentyl phosphate. Its function is as follows. Involved in the degradation of phospho-AI-2, thereby terminating induction of the lsr operon and closing the AI-2 signaling cycle. Catalyzes the conversion of (4S)-4-hydroxy-5-phosphonooxypentane-2,3-dione (P-DPD) to 3-hydroxy-5-phosphonooxypentane-2,4-dione (P-HPD). The chain is (4S)-4-hydroxy-5-phosphonooxypentane-2,3-dione isomerase from Escherichia coli O9:H4 (strain HS).